An 868-amino-acid polypeptide reads, in one-letter code: Transcription factor pynR (868 aa).

The segment at residues 11-37 (CTFCRTRKIACSGERICNACRSRSIEC) is a DNA-binding region (zn(2)-C6 fungal-type). 4 disordered regions span residues 51-88 (NKTT…TSAV), 662-683 (LSGS…LDLS), 715-761 (SGIP…ASDL), and 829-868 (GMGE…GMSN). Composition is skewed to low complexity over residues 663–683 (SGSR…LDLS) and 715–727 (SGIP…SISH).

It localises to the nucleus. Functionally, transcription factor that regulates the expression of the gene cluster that mediates the biosynthesis of pyranonigrins, a family of antioxidative compounds. The polypeptide is Transcription factor pynR (Aspergillus niger (strain ATCC MYA-4892 / CBS 513.88 / FGSC A1513)).